Here is a 167-residue protein sequence, read N- to C-terminus: uncharacterized protein (167 aa).

A coiled-coil region spans residues 28-59 (LTGIREELKADIDETRLIAESVLEEKEKKVVE).

This is an uncharacterized protein from Aquifex aeolicus (strain VF5).